The primary structure comprises 93 residues: Uteroglobin (93 aa).

An N-terminal signal peptide occupies residues 1-17 (MKLAITIILVMLSVCYS).

This sequence belongs to the secretoglobin family. As to quaternary structure, antiparallel homodimer; disulfide-linked. Interaction with LMBR1L is controversial.

The protein resides in the secreted. Functionally, binds phosphatidylcholine, phosphatidylinositol, polychlorinated biphenyls (PCB) and weakly progesterone, potent inhibitor of phospholipase A2. This Neotomodon alstoni (Mexican volcano mouse) protein is Uteroglobin (SCGB1A1).